Reading from the N-terminus, the 136-residue chain is UPF0216 protein PH0358 (136 aa).

This sequence belongs to the UPF0216 family.

This is UPF0216 protein PH0358 from Pyrococcus horikoshii (strain ATCC 700860 / DSM 12428 / JCM 9974 / NBRC 100139 / OT-3).